The chain runs to 557 residues: Large cysteine-rich periplasmic protein omcB (557 aa).

Residues Met1–Ala22 form the signal peptide. The propeptide occupies Ser23–Ala40.

In terms of assembly, part of a disulfide cross-linked outer membrane complex (COMC) composed of the major outer membrane porin (MOMP), the small cysteine-rich protein (omcA) and the large cysteine-rich periplasmic protein (omcB).

It localises to the periplasm. Functionally, in elementary bodies (EBs, the infectious stage, which is able to survive outside the host cell) provides the structural integrity of the outer envelope through disulfide cross-links with the small cysteine-rich protein and the major outer membrane porin. It has been described in publications as the Sarkosyl-insoluble COMC (Chlamydia outer membrane complex), and serves as the functional equivalent of peptidoglycan. The protein is Large cysteine-rich periplasmic protein omcB (omcB) of Chlamydophila psittaci (strain ATCC VR-125 / 6BC) (Chlamydia psittaci).